Here is a 268-residue protein sequence, read N- to C-terminus: Hydroxyethylthiazole kinase (268 aa).

Residue Met-45 participates in substrate binding. Residues Arg-121 and Thr-167 each coordinate ATP. Residue Gly-194 coordinates substrate.

Belongs to the Thz kinase family. Mg(2+) serves as cofactor.

The enzyme catalyses 5-(2-hydroxyethyl)-4-methylthiazole + ATP = 4-methyl-5-(2-phosphooxyethyl)-thiazole + ADP + H(+). Its pathway is cofactor biosynthesis; thiamine diphosphate biosynthesis; 4-methyl-5-(2-phosphoethyl)-thiazole from 5-(2-hydroxyethyl)-4-methylthiazole: step 1/1. Functionally, catalyzes the phosphorylation of the hydroxyl group of 4-methyl-5-beta-hydroxyethylthiazole (THZ). This Bacillus cereus (strain ZK / E33L) protein is Hydroxyethylthiazole kinase.